The primary structure comprises 111 residues: NADH-ubiquinone oxidoreductase chain 4 (111 aa).

Residues 35-55 (LITSLFSWLDITVFLTGLSAF) form a helical membrane-spanning segment.

This sequence belongs to the complex I subunit 4 family.

It is found in the mitochondrion membrane. It catalyses the reaction a ubiquinone + NADH + 5 H(+)(in) = a ubiquinol + NAD(+) + 4 H(+)(out). Core subunit of the mitochondrial membrane respiratory chain NADH dehydrogenase (Complex I) that is believed to belong to the minimal assembly required for catalysis. Complex I functions in the transfer of electrons from NADH to the respiratory chain. The immediate electron acceptor for the enzyme is believed to be ubiquinone. The protein is NADH-ubiquinone oxidoreductase chain 4 (MT-ND4) of Caiman crocodilus (Spectacled caiman).